Here is a 154-residue protein sequence, read N- to C-terminus: Protein X (154 aa).

The mitochondrial targeting sequence stretch occupies residues 68–117 (PCALRFTSARRMETTVNAPWSLPTVLHKRTIGLSGRSMTWIEEYIKDCVF).

The protein belongs to the orthohepadnavirus protein X family. May form homodimer. May interact with host CEBPA, CFLAR, CREB1, DDB1, E4F1, HBXIP, HSPD1/HSP60, NFKBIA, POLR2E and SMAD4. Interacts with host SMC5-SMC6 complex and induces its degradation. Interacts with host TRPC4AP; leading to prevent ubiquitination of TRPC4AP. Interacts with host PLSCR1; this interaction promotes ubiquitination and degradation of HBx and impairs HBx-mediated cell proliferation. In terms of processing, a fraction may be phosphorylated in insect cells and HepG2 cells, a human hepatoblastoma cell line. Phosphorylated in vitro by host protein kinase C or mitogen-activated protein kinase. N-acetylated in insect cells.

The protein localises to the host cytoplasm. Its subcellular location is the host nucleus. It is found in the host mitochondrion. Multifunctional protein that plays a role in silencing host antiviral defenses and promoting viral transcription. Does not seem to be essential for HBV infection. May be directly involved in development of cirrhosis and liver cancer (hepatocellular carcinoma). Most of cytosolic activities involve modulation of cytosolic calcium. The effect on apoptosis is controversial depending on the cell types in which the studies have been conducted. May induce apoptosis by localizing in mitochondria and causing loss of mitochondrial membrane potential. May also modulate apoptosis by binding host CFLAR, a key regulator of the death-inducing signaling complex (DISC). Promotes viral transcription by using the host E3 ubiquitin ligase DDB1 to target the SMC5-SMC6 complex to proteasomal degradation. This host complex would otherwise bind to viral episomal DNA, and prevents its transcription. Moderately stimulates transcription of many different viral and cellular transcription elements. Promoters and enhancers stimulated by HBx contain DNA binding sites for NF-kappa-B, AP-1, AP-2, c-EBP, ATF/CREB, or the calcium-activated factor NF-AT. The sequence is that of Protein X from Homo sapiens (Human).